The sequence spans 782 residues: General transcription and DNA repair factor IIH helicase/translocase subunit XPB (782 aa).

A compositionally biased stretch (basic and acidic residues) spans 1 to 11 (MGKRDRADREK). Residues 1-51 (MGKRDRADREKKKSKKRHYEDEEDEEDDAPGNDTQEAVPSAAGKQVDESGT) are disordered. Residues 6–18 (RADREKKKSKKRH) carry the Nuclear localization signal motif. The span at 21 to 30 (DEEDEEDDAP) shows a compositional bias: acidic residues. The region spanning 327-488 (MFGNGRARSG…DLNFLIGPKL (162 aa)) is the Helicase ATP-binding domain. Residue 340–347 (LPCGAGKS) participates in ATP binding. The DEVH box motif lies at 441 to 444 (DEVH). The Helicase C-terminal domain maps to 542 to 702 (RACQFLIKFH…LAGMEEEDLA (161 aa)). Residue serine 686 is modified to Phosphoserine. Serine 751 carries the post-translational modification Phosphoserine; by CK2.

This sequence belongs to the helicase family. RAD25/XPB subfamily. In terms of assembly, component of the 7-subunit TFIIH core complex composed of XPB/ERCC3, XPD/ERCC2, GTF2H1, GTF2H2, GTF2H3, GTF2H4 and GTF2H5, which is active in NER. The core complex associates with the 3-subunit CDK-activating kinase (CAK) module composed of CCNH/cyclin H, CDK7 and MNAT1 to form the 10-subunit holoenzyme (holo-TFIIH) active in transcription. Interacts with PUF60. Interacts with ATF7IP. Interacts with KAT2A; leading to KAT2A recruitment to promoters and acetylation of histones. Part of TBP-based Pol II pre-initiation complex (PIC), in which Pol II core assembles with general transcription factors and other specific initiation factors including GTF2E1, GTF2E2, GTF2F1, GTF2F2, TCEA1, ERCC2, ERCC3, GTF2H2, GTF2H3, GTF2H4, GTF2H5, GTF2A1, GTF2A2, GTF2B and TBP; this large multi-subunit PIC complex mediates DNA unwinding and targets Pol II core to the transcription start site where the first phosphodiester bond forms. Phosphorylation on Ser-751 by CK2 controls the 5'-excision activity of ERCC1-XPF endonuclease; phosphorylated protein inhibits the excision activity and thus NER. Dephosphorylation reactivates the 5'-excision step. Phosphorylation has no effect on transcription or the 3'-5' helicase activity.

Its subcellular location is the nucleus. The enzyme catalyses Couples ATP hydrolysis with the unwinding of duplex DNA by translocating in the 3'-5' direction.. The catalysed reaction is ATP + H2O = ADP + phosphate + H(+). With respect to regulation, phosphorylation on Ser-751 by CK2 controls the 5'-excision activity of ERCC1-XPF endonuclease; phosphorylated protein inhibits the excision activity and thus NER. ATPase activity is stimulated by TFIIH subunit p52 (GTF2H4). DNA translocase activity by this subunit in TFIIH is stimulated by XPA, ERCC5/XPG and XFP plus ERCC1. ATP-dependent 3'-5' DNA helicase/translocase; binds dsDNA rather than ssDNA, unzipping it in a translocase rather than classical helicase activity. Component of the general transcription and DNA repair factor IIH (TFIIH) core complex. When complexed to CDK-activating kinase (CAK), involved in RNA transcription by RNA polymerase II. The ATPase activity of XPB/ERCC3, but not its helicase activity, is required for DNA opening; it may wrap around the damaged DNA wedging it open, causing localized melting and twisting that allows XPD/ERCC2 helicase to anchor. The ATP-dependent helicase activity of XPB/ERCC3 may be required for promoter escape. Also involved in transcription-coupled nucleotide excision repair (NER) of damaged DNA. In NER, TFIIH acts by opening DNA around the lesion to allow the excision of the damaged oligonucleotide and its replacement by a new DNA fragment. The structure of the TFIIH transcription complex differs from the NER-TFIIH complex; large movements by XPD/ERCC2 and XPB/ERCC3 are stabilized by XPA. The polypeptide is General transcription and DNA repair factor IIH helicase/translocase subunit XPB (ERCC3) (Bos taurus (Bovine)).